We begin with the raw amino-acid sequence, 383 residues long: Lipid-A-disaccharide synthase (383 aa).

The protein belongs to the LpxB family.

It catalyses the reaction a lipid X + a UDP-2-N,3-O-bis[(3R)-3-hydroxyacyl]-alpha-D-glucosamine = a lipid A disaccharide + UDP + H(+). It participates in bacterial outer membrane biogenesis; LPS lipid A biosynthesis. In terms of biological role, condensation of UDP-2,3-diacylglucosamine and 2,3-diacylglucosamine-1-phosphate to form lipid A disaccharide, a precursor of lipid A, a phosphorylated glycolipid that anchors the lipopolysaccharide to the outer membrane of the cell. The chain is Lipid-A-disaccharide synthase from Alcanivorax borkumensis (strain ATCC 700651 / DSM 11573 / NCIMB 13689 / SK2).